The chain runs to 372 residues: Glutamate 5-kinase (372 aa).

Residue Lys14 participates in ATP binding. Positions 54, 141, and 153 each coordinate substrate. Position 173–174 (Thr173–Asp174) interacts with ATP. Residues Arg280–Met358 enclose the PUA domain.

The protein belongs to the glutamate 5-kinase family.

Its subcellular location is the cytoplasm. It catalyses the reaction L-glutamate + ATP = L-glutamyl 5-phosphate + ADP. Its pathway is amino-acid biosynthesis; L-proline biosynthesis; L-glutamate 5-semialdehyde from L-glutamate: step 1/2. Functionally, catalyzes the transfer of a phosphate group to glutamate to form L-glutamate 5-phosphate. The sequence is that of Glutamate 5-kinase from Burkholderia multivorans (strain ATCC 17616 / 249).